Reading from the N-terminus, the 620-residue chain is Chaperone protein HtpG (620 aa).

Residues 1-334 form an a; substrate-binding region; it reads MTTTDTAPQS…SEDLPLNLSR (334 aa). The segment at 335 to 548 is b; the sequence is EMLQNNPQLA…GLGPDRALER (214 aa). The c stretch occupies residues 549–620; the sequence is MLAQQNRGAA…RLNRLVLRAL (72 aa).

Belongs to the heat shock protein 90 family. As to quaternary structure, homodimer.

The protein localises to the cytoplasm. Functionally, molecular chaperone. Has ATPase activity. In Rhodopseudomonas palustris (strain BisB18), this protein is Chaperone protein HtpG.